Reading from the N-terminus, the 222-residue chain is PKHD-type hydroxylase P9301_13621 (222 aa).

The Fe2OG dioxygenase domain maps to 81–175 (KIHGIMFTKS…RLVCVGWIES (95 aa)). The Fe cation site is built by His99, Asp101, and His156. Residue Arg166 coordinates 2-oxoglutarate.

Fe(2+) serves as cofactor. The cofactor is L-ascorbate.

The sequence is that of PKHD-type hydroxylase P9301_13621 from Prochlorococcus marinus (strain MIT 9301).